The primary structure comprises 1681 residues: Y' element ATP-dependent helicase protein 1 copy 2 (1681 aa).

The Helicase ATP-binding domain occupies 683 to 860; it reads EIYMADTPSV…LQRIGLTGLA (178 aa). ATP is bound at residue 696 to 703; it reads APPGYGKT. A Helicase C-terminal domain is found at 917-1066; sequence KLLLALFEIE…EFYGLESKKG (150 aa). Residues 1140-1283 are compositionally biased toward low complexity; the sequence is ANASTNATTN…ATTTESTNAS (144 aa). Residues 1140–1307 form a disordered region; sequence ANASTNATTN…RFHPVTDINK (168 aa). The segment covering 1284–1307 has biased composition (basic and acidic residues); that stretch reads AKEDANKDGNAEDNRFHPVTDINK.

It belongs to the helicase family. Yeast subtelomeric Y' repeat subfamily.

Its function is as follows. Catalyzes DNA unwinding and is involved in telomerase-independent telomere maintenance. This Saccharomyces cerevisiae (strain ATCC 204508 / S288c) (Baker's yeast) protein is Y' element ATP-dependent helicase protein 1 copy 2 (YRF1-2).